A 138-amino-acid polypeptide reads, in one-letter code: Large ribosomal subunit protein uL16 (138 aa).

Basic residues predominate over residues 1–15 (MLSPKKVKYRKKQRG). The segment at 1–20 (MLSPKKVKYRKKQRGRLSGE) is disordered.

Belongs to the universal ribosomal protein uL16 family. Part of the 50S ribosomal subunit.

Functionally, binds 23S rRNA and is also seen to make contacts with the A and possibly P site tRNAs. This chain is Large ribosomal subunit protein uL16, found in Borrelia hermsii (strain HS1 / DAH).